The sequence spans 513 residues: Putative GMP synthase [glutamine-hydrolyzing] (513 aa).

Residues 8–198 form the Glutamine amidotransferase type-1 domain; sequence MIVVLDFGGQ…AFAVCGCEGN (191 aa). Catalysis depends on C85, which acts as the Nucleophile. The active site involves E174. In terms of domain architecture, GMPS ATP-PPase spans 199 to 388; it reads WSMENFIELE…LGIPDEVVWR (190 aa). ATP is bound at residue 226-232; the sequence is SGGVDSS.

In terms of assembly, homodimer.

The enzyme catalyses XMP + L-glutamine + ATP + H2O = GMP + L-glutamate + AMP + diphosphate + 2 H(+). The protein operates within purine metabolism; GMP biosynthesis; GMP from XMP (L-Gln route): step 1/1. Its function is as follows. Catalyzes the synthesis of GMP from XMP. In Halalkalibacterium halodurans (strain ATCC BAA-125 / DSM 18197 / FERM 7344 / JCM 9153 / C-125) (Bacillus halodurans), this protein is Putative GMP synthase [glutamine-hydrolyzing] (guaA).